Here is a 21-residue protein sequence, read N- to C-terminus: Testis ecdysiotropin peptide 1 (21 aa).

The disordered stretch occupies residues 1 to 21; that stretch reads ISDFDEYEPLNDADNNEVLDF.

Functionally, start or boost ecdysteroid synthesis in testis of larvae and pupae. This Lymantria dispar (Gypsy moth) protein is Testis ecdysiotropin peptide 1.